The following is a 520-amino-acid chain: Cytochrome b5 reductase 4 (520 aa).

An N-acetylmethionine modification is found at methionine 1. A compositionally biased stretch (low complexity) spans 1 to 16; that stretch reads MLNVPSQSFPGPSSQQ. Positions 1-27 are disordered; that stretch reads MLNVPSQSFPGPSSQQRVASGGRSKVP. Residues 54-130 enclose the Cytochrome b5 heme-binding domain; the sequence is LIEVTEEELK…LKECLVGRMA (77 aa). 2 residues coordinate heme: histidine 89 and histidine 112. Residues 164 to 255 enclose the CS domain; that stretch reads PSSPSYDWFQ…KENTSWKCLG (92 aa). Positions 272 to 384 constitute an FAD-binding FR-type domain; the sequence is LFYRKCQLVS…SNPEGNFIIS (113 aa). FAD-binding positions include 364-379 and 391-423; these read DQLQ…NPEG and DLFL…KVKL.

It belongs to the flavoprotein pyridine nucleotide cytochrome reductase family. FAD serves as cofactor.

It is found in the endoplasmic reticulum. It carries out the reaction 2 Fe(III)-[cytochrome b5] + NADH = 2 Fe(II)-[cytochrome b5] + NAD(+) + H(+). NADH-cytochrome b5 reductase involved in endoplasmic reticulum stress response pathway. Plays a critical role in protecting pancreatic beta-cells against oxidant stress, possibly by protecting the cell from excess buildup of reactive oxygen species (ROS). The polypeptide is Cytochrome b5 reductase 4 (CYB5R4) (Bos taurus (Bovine)).